The sequence spans 222 residues: GTP cyclohydrolase 1 (222 aa).

Zn(2+) is bound by residues cysteine 111, histidine 114, and cysteine 182.

Belongs to the GTP cyclohydrolase I family. As to quaternary structure, toroid-shaped homodecamer, composed of two pentamers of five dimers.

The catalysed reaction is GTP + H2O = 7,8-dihydroneopterin 3'-triphosphate + formate + H(+). It participates in cofactor biosynthesis; 7,8-dihydroneopterin triphosphate biosynthesis; 7,8-dihydroneopterin triphosphate from GTP: step 1/1. This Citrobacter koseri (strain ATCC BAA-895 / CDC 4225-83 / SGSC4696) protein is GTP cyclohydrolase 1.